The chain runs to 118 residues: Late cornified envelope protein 1C (118 aa).

Residues Met-1–Cys-10 are compositionally biased toward low complexity. Disordered regions lie at residues Met-1–Lys-23 and Cys-87–Cys-118. Pro residues predominate over residues Gln-11–Lys-23. The span at Pro-90–Ser-103 shows a compositional bias: low complexity. Residues Ser-104–Cys-118 are compositionally biased toward gly residues.

It belongs to the LCE family. As to quaternary structure, interacts with CYSRT1. In terms of tissue distribution, skin-specific. Expression was readily detected in adult trunk skin, adult arm skin, fetal skin, penal skin, vulva, esophagus and tongue. Not expressed in the cervix, rectum, lung, colon, or placenta.

Functionally, precursors of the cornified envelope of the stratum corneum. The chain is Late cornified envelope protein 1C (LCE1C) from Homo sapiens (Human).